Reading from the N-terminus, the 299-residue chain is 33 kDa chaperonin (299 aa).

Cystine bridges form between cysteine 234–cysteine 236 and cysteine 268–cysteine 271.

Belongs to the HSP33 family. In terms of processing, under oxidizing conditions two disulfide bonds are formed involving the reactive cysteines. Under reducing conditions zinc is bound to the reactive cysteines and the protein is inactive.

Its subcellular location is the cytoplasm. In terms of biological role, redox regulated molecular chaperone. Protects both thermally unfolding and oxidatively damaged proteins from irreversible aggregation. Plays an important role in the bacterial defense system toward oxidative stress. The protein is 33 kDa chaperonin of Pseudomonas putida (strain ATCC 47054 / DSM 6125 / CFBP 8728 / NCIMB 11950 / KT2440).